A 246-amino-acid polypeptide reads, in one-letter code: PF03932 family protein CutC (246 aa).

The protein belongs to the CutC family.

The protein resides in the cytoplasm. The polypeptide is PF03932 family protein CutC (Treponema denticola (strain ATCC 35405 / DSM 14222 / CIP 103919 / JCM 8153 / KCTC 15104)).